The chain runs to 423 residues: Adenylosuccinate synthetase (423 aa).

GTP contacts are provided by residues 12 to 18 (GDEGKGK) and 40 to 42 (GHT). Catalysis depends on aspartate 13, which acts as the Proton acceptor. Mg(2+)-binding residues include aspartate 13 and glycine 40. Residues 13 to 16 (DEGK), 38 to 41 (NAGH), threonine 129, arginine 143, glutamine 221, threonine 236, and arginine 300 contribute to the IMP site. Residue histidine 41 is the Proton donor of the active site. A substrate-binding site is contributed by 296-302 (SVTGRKR). Residues arginine 302, 328 to 330 (KSD), and 408 to 410 (SVG) contribute to the GTP site.

The protein belongs to the adenylosuccinate synthetase family. In terms of assembly, homodimer. Requires Mg(2+) as cofactor.

The protein localises to the cytoplasm. The enzyme catalyses IMP + L-aspartate + GTP = N(6)-(1,2-dicarboxyethyl)-AMP + GDP + phosphate + 2 H(+). The protein operates within purine metabolism; AMP biosynthesis via de novo pathway; AMP from IMP: step 1/2. Its function is as follows. Plays an important role in the de novo pathway of purine nucleotide biosynthesis. Catalyzes the first committed step in the biosynthesis of AMP from IMP. The chain is Adenylosuccinate synthetase from Bacteroides fragilis (strain ATCC 25285 / DSM 2151 / CCUG 4856 / JCM 11019 / LMG 10263 / NCTC 9343 / Onslow / VPI 2553 / EN-2).